A 392-amino-acid polypeptide reads, in one-letter code: Serine protease ea (392 aa).

The first 19 residues, 1–19, serve as a signal peptide directing secretion; sequence MLKPSIICLFLGILAKSSA. A propeptide spans 20 to 127 (activation peptide); that stretch reads GQFYFPNEAA…GQCGNILSNR (108 aa). The Clip domain maps to 36-89; that stretch reads RCITPNRERALCIHLEDCKYLYGLLTTTPLRDTDRLYLSRSQCGYTNGKVLICC. 3 cysteine pairs are disulfide-bonded: Cys-37/Cys-88, Cys-47/Cys-78, and Cys-53/Cys-89. Asn-107 carries N-linked (GlcNAc...) asparagine glycosylation. Disulfide bonds link Cys-120-Cys-260, Cys-158-Cys-174, Cys-202-Cys-212, Cys-307-Cys-324, and Cys-334-Cys-367. One can recognise a Peptidase S1 domain in the interval 128-391; it reads IYGGMKTKID…YVDWIQNTIE (264 aa). His-173 (charge relay system) is an active-site residue. Ca(2+) is bound by residues Glu-193, Asp-195, Thr-198, and Asp-201. Asp-240 serves as the catalytic Charge relay system. Ser-338 (charge relay system) is an active-site residue.

The protein belongs to the peptidase S1 family. CLIP subfamily. Interacts with Spn27A; the two proteins are covalently linked leading to inhibition of ea catalytic activity. Interacts (via Peptidase domain) with snk (via N-terminal prodomain); leads to proteolytic activation of ea by snk. Sulfation of a vitelline membrane component by pip is required for proteolytic cleavage of ea by snk but not for the interaction of ea with snk. Proteolytically cleaved by snk. Activation peptide and active catalytic domain remain associated by a disulfide bond. Processed ea/easter is present in extremely low amounts in the early embryo as it is rapidly converted into a high molecular mass complex made up of ea covalently bound to the serpin Spn27A. Zymogen activation is also controlled by a negative feedback loop from Dorsal.

It localises to the secreted. With respect to regulation, activated proteolytically by snk; activation requires both activation of the ndl-gd-snk protease cascade and sulfation of a vitelline membrane component by pip. Inhibited by binding of the serpin Spn27A. Functionally, component of the extracellular signaling pathway that establishes the dorsal-ventral pathway of the embryo. A protease cascade involving ndl, gd, snk and ea results in activation of the spz Toll receptor ligand; acts downstream of ndl, gd and snk and is required for proteolytic processing of spz. Activation of ea requires both activation of the ndl-gd-snk protease cascade and sulfation of a vitelline membrane component by pip. Localized activation of the Toll receptor in the ventral region of the embryo defines cell identities along the dorsal-ventral continuum. The polypeptide is Serine protease ea (Drosophila melanogaster (Fruit fly)).